The sequence spans 116 residues: uncharacterized protein (116 aa).

2 disordered regions span residues 1–26 (MLLTPAKTTRTEDSANSTDDSSKSSN) and 74–116 (ENDL…KSSI). The segment covering 14–26 (SANSTDDSSKSSN) has biased composition (low complexity). The span at 74–86 (ENDLKRSKSQGRE) shows a compositional bias: basic and acidic residues. Over residues 104–116 (NTASEIQRTKSSI) the composition is skewed to polar residues.

This is an uncharacterized protein from Saccharomyces cerevisiae (strain ATCC 204508 / S288c) (Baker's yeast).